The chain runs to 118 residues: Large ribosomal subunit protein eL22 (118 aa).

The protein belongs to the eukaryotic ribosomal protein eL22 family.

The polypeptide is Large ribosomal subunit protein eL22 (RPL22) (Tetrahymena thermophila (strain SB210)).